The following is a 393-amino-acid chain: MNGLLHMHGPAVKKLLGWKIGEDEEKWCEKAVEALVKKLKKKNNGCGTLEDLECVLANPCTNSRCITIAKSLDGRLQVSHKKGLPHVIYCRVWRWPDISSPHELRSIDTCSYPYESSSKTMYICINPYHYQRLSRPQGLNSSMPSPQPISSPNTIWQSSGSSTASCASSPSPSVFSEDGGEVQVHQRPPPFRHPKSWAQITYFELNSRVGEVFKLVNLSITVDGYTNPSNSNTRICLGQLTNVNRNGTIENTRMHIGKGIQLDNKEDQMHIMITNNSDMPVFVQSKNTNLMMNMPLVKVCRIPPHSQLCVFEFNLFFQMLEQSCNDSDGLNELSKHCFIRISFVKGWGEDYPRQDVTSTPCWLELRLNVPLAYIDQKMKQTPRTNLMEPNSMT.

An MH1 domain is found at 10–139; sequence PAVKKLLGWK…YQRLSRPQGL (130 aa). Positions 65, 110, 124, and 129 each coordinate Zn(2+). The segment at 136-190 is disordered; that stretch reads PQGLNSSMPSPQPISSPNTIWQSSGSSTASCASSPSPSVFSEDGGEVQVHQRPPP. Positions 141–176 are enriched in low complexity; that stretch reads SSMPSPQPISSPNTIWQSSGSSTASCASSPSPSVFS. One can recognise an MH2 domain in the interval 197 to 393; the sequence is WAQITYFELN…TNLMEPNSMT (197 aa).

It belongs to the dwarfin/SMAD family.

The protein localises to the cytoplasm. It localises to the nucleus. Its function is as follows. Involved in TGF-beta pathway. Plays a role in male tail tip morphogenesis. This is Dwarfin sma-3 from Caenorhabditis elegans.